We begin with the raw amino-acid sequence, 85 residues long: Phosphocarrier protein HPr (85 aa).

Positions 1-85 constitute an HPr domain; that stretch reads MFQQEVTITA…HLVKLMAELE (85 aa). His15 (pros-phosphohistidine intermediate) is an active-site residue.

The protein resides in the cytoplasm. In terms of biological role, general (non sugar-specific) component of the phosphoenolpyruvate-dependent sugar phosphotransferase system (sugar PTS). This major carbohydrate active-transport system catalyzes the phosphorylation of incoming sugar substrates concomitantly with their translocation across the cell membrane. The phosphoryl group from phosphoenolpyruvate (PEP) is transferred to the phosphoryl carrier protein HPr by enzyme I. Phospho-HPr then transfers it to the PTS EIIA domain. The protein is Phosphocarrier protein HPr (ptsH) of Klebsiella pneumoniae.